The following is a 367-amino-acid chain: Ferrochelatase (367 aa).

Positions 226 and 307 each coordinate Fe cation.

The protein belongs to the ferrochelatase family.

It is found in the cytoplasm. The enzyme catalyses heme b + 2 H(+) = protoporphyrin IX + Fe(2+). The protein operates within porphyrin-containing compound metabolism; protoheme biosynthesis; protoheme from protoporphyrin-IX: step 1/1. Functionally, catalyzes the ferrous insertion into protoporphyrin IX. This Burkholderia pseudomallei (strain 668) protein is Ferrochelatase.